Consider the following 419-residue polypeptide: 3-isopropylmalate dehydratase large subunit (419 aa).

Residues C300, C360, and C363 each contribute to the [4Fe-4S] cluster site.

Belongs to the aconitase/IPM isomerase family. LeuC type 2 subfamily. Heterodimer of LeuC and LeuD. The cofactor is [4Fe-4S] cluster.

It carries out the reaction (2R,3S)-3-isopropylmalate = (2S)-2-isopropylmalate. It participates in amino-acid biosynthesis; L-leucine biosynthesis; L-leucine from 3-methyl-2-oxobutanoate: step 2/4. Its function is as follows. Catalyzes the isomerization between 2-isopropylmalate and 3-isopropylmalate, via the formation of 2-isopropylmaleate. The chain is 3-isopropylmalate dehydratase large subunit from Desulfatibacillum aliphaticivorans.